The following is a 225-amino-acid chain: Cytidylate kinase (225 aa).

10–18 contacts ATP; the sequence is GPASSGKST.

The protein belongs to the cytidylate kinase family. Type 1 subfamily.

The protein resides in the cytoplasm. The enzyme catalyses CMP + ATP = CDP + ADP. The catalysed reaction is dCMP + ATP = dCDP + ADP. The sequence is that of Cytidylate kinase from Streptococcus suis (strain 98HAH33).